A 389-amino-acid chain; its full sequence is Phosphatidylglycerol--prolipoprotein diacylglyceryl transferase (389 aa).

A run of 4 helical transmembrane segments spans residues 28–48 (IIVA…LIYF), 58–78 (FFIF…YFLI), 98–118 (LAIQ…FNVF), and 148–168 (ISVF…QAIG). Position 169 (Arg169) interacts with a 1,2-diacyl-sn-glycero-3-phospho-(1'-sn-glycerol). The next 3 membrane-spanning stretches (helical) occupy residues 220–240 (IPLF…IYFV), 281–301 (IVFS…CQTL), and 309–329 (FWTY…TTLF).

The protein belongs to the Lgt family.

The protein resides in the cell membrane. The catalysed reaction is L-cysteinyl-[prolipoprotein] + a 1,2-diacyl-sn-glycero-3-phospho-(1'-sn-glycerol) = an S-1,2-diacyl-sn-glyceryl-L-cysteinyl-[prolipoprotein] + sn-glycerol 1-phosphate + H(+). The protein operates within protein modification; lipoprotein biosynthesis (diacylglyceryl transfer). Catalyzes the transfer of the diacylglyceryl group from phosphatidylglycerol to the sulfhydryl group of the N-terminal cysteine of a prolipoprotein, the first step in the formation of mature lipoproteins. This chain is Phosphatidylglycerol--prolipoprotein diacylglyceryl transferase, found in Mycoplasma pneumoniae (strain ATCC 29342 / M129 / Subtype 1) (Mycoplasmoides pneumoniae).